We begin with the raw amino-acid sequence, 95 residues long: MTKSELIETLAQQHAHVPVKDVENAVKEILEQMAGSLSSSDRIEIRGFGSFSLHYRAPRTGRNPKTGETVELDGKHVPHFKPGKELRDRVNESIA.

Residues 56–95 are disordered; it reads RAPRTGRNPKTGETVELDGKHVPHFKPGKELRDRVNESIA. Positions 72–95 are enriched in basic and acidic residues; it reads LDGKHVPHFKPGKELRDRVNESIA.

Belongs to the bacterial histone-like protein family. As to quaternary structure, heterodimer of an alpha and a beta chain.

In terms of biological role, this protein is one of the two subunits of integration host factor, a specific DNA-binding protein that functions in genetic recombination as well as in transcriptional and translational control. The chain is Integration host factor subunit beta from Pseudoalteromonas translucida (strain TAC 125).